A 233-amino-acid polypeptide reads, in one-letter code: Cytidylate kinase (233 aa).

15–23 (GPSGAGKSS) contributes to the ATP binding site.

This sequence belongs to the cytidylate kinase family. Type 1 subfamily.

Its subcellular location is the cytoplasm. The enzyme catalyses CMP + ATP = CDP + ADP. It carries out the reaction dCMP + ATP = dCDP + ADP. The protein is Cytidylate kinase of Citrifermentans bemidjiense (strain ATCC BAA-1014 / DSM 16622 / JCM 12645 / Bem) (Geobacter bemidjiensis).